The chain runs to 99 residues: DNA-directed RNA polymerase subunit omega (99 aa).

Residues 1-10 are compositionally biased toward low complexity; it reads MSSTSAASAA. Residues 1 to 20 are disordered; sequence MSSTSAASAAGQGALPAYDT.

Belongs to the RNA polymerase subunit omega family. The RNAP catalytic core consists of 2 alpha, 1 beta, 1 beta' and 1 omega subunit. When a sigma factor is associated with the core the holoenzyme is formed, which can initiate transcription.

The enzyme catalyses RNA(n) + a ribonucleoside 5'-triphosphate = RNA(n+1) + diphosphate. Its function is as follows. Promotes RNA polymerase assembly. Latches the N- and C-terminal regions of the beta' subunit thereby facilitating its interaction with the beta and alpha subunits. This chain is DNA-directed RNA polymerase subunit omega, found in Rhodococcus erythropolis (strain PR4 / NBRC 100887).